Here is a 311-residue protein sequence, read N- to C-terminus: PVLQDFSNKGTLWGFVPFVDEQQPTEIPIPITLHIGDYNMDGYPDALVILKNTSGSNQQAFLLENVPCNNASCEEARRMFKVYWELTDLNQIKDAMVATFFDIYEDGILDIVVLSKGYTKNDFAIHTLKNNFEADAYFVKVIVLSGLCSNDCPRKITPFGVNQPGPYIMYTTVDANGYLKNGSAGQLSQSAHLALQLPYNVLGLGRSANFLDHLYVGIPRPSGEKSIRKQEWTAIIPNSQLIVIPYPHNVPRSWSAKLYLTPSNIVLLTAIALIGVCVFILAIIGILHWQEKKADDREKRQEAHRFHFDAM.

3 N-linked (GlcNAc...) asparagine glycosylation sites follow: N52, N70, and N181. The helical transmembrane segment at 266-286 (VLLTAIALIGVCVFILAIIGI) threads the bilayer.

This sequence belongs to the TIP family. As to quaternary structure, interacts with RUVBL1, RUVBL2 and alpha-tubulin.

It is found in the secreted. Its subcellular location is the cell membrane. Modulator of T-cell function. Has a protective effect in graft versus host disease model. In Macaca fascicularis (Crab-eating macaque), this protein is T-cell immunomodulatory protein.